A 275-amino-acid polypeptide reads, in one-letter code: Phosphonoacetaldehyde hydrolase (275 aa).

The active-site Nucleophile is the Asp15. Mg(2+) is bound by residues Asp15 and Ala17. Lys56 acts as the Schiff-base intermediate with substrate in catalysis. Asp189 provides a ligand contact to Mg(2+).

The protein belongs to the HAD-like hydrolase superfamily. PhnX family. In terms of assembly, homodimer. Requires Mg(2+) as cofactor.

The enzyme catalyses phosphonoacetaldehyde + H2O = acetaldehyde + phosphate + H(+). Its function is as follows. Involved in phosphonate degradation. In Pseudomonas putida (strain W619), this protein is Phosphonoacetaldehyde hydrolase.